The following is a 285-amino-acid chain: Energy-coupling factor transporter ATP-binding protein EcfA2 (285 aa).

In terms of domain architecture, ABC transporter spans 3–245 (IKFKKVDYIY…RKWLKKHNLS (243 aa)). ATP is bound at residue 40–47 (GHTGSGKS).

Belongs to the ABC transporter superfamily. Energy-coupling factor EcfA family. Forms a stable energy-coupling factor (ECF) transporter complex composed of 2 membrane-embedded substrate-binding proteins (S component), 2 ATP-binding proteins (A component) and 2 transmembrane proteins (T component).

The protein localises to the cell membrane. Functionally, ATP-binding (A) component of a common energy-coupling factor (ECF) ABC-transporter complex. Unlike classic ABC transporters this ECF transporter provides the energy necessary to transport a number of different substrates. This is Energy-coupling factor transporter ATP-binding protein EcfA2 from Lactobacillus acidophilus (strain ATCC 700396 / NCK56 / N2 / NCFM).